A 71-amino-acid chain; its full sequence is Large ribosomal subunit protein uL29 (71 aa).

Belongs to the universal ribosomal protein uL29 family.

The protein is Large ribosomal subunit protein uL29 of Rickettsia massiliae (strain Mtu5).